Reading from the N-terminus, the 174-residue chain is Zinc finger AN1 domain-containing stress-associated protein 15 (174 aa).

A disordered region spans residues 1–61 (MAQESCDLNK…TPPAAAAAAS (61 aa)). Low complexity predominate over residues 18–41 (PSSSSSPSPSPTTASPSPPTAQMT). Positions 42–54 (EPPPPQSTPPTPP) are enriched in pro residues. An AN1-type zinc finger spans residues 109–155 (VLFVNRCNVCRKRVGLTGFRCRCGELFCPRHRHSETHECSFDYKTAG). Zn(2+)-binding residues include Cys115, Cys118, Cys129, Cys131, Cys136, His139, His145, and Cys147.

Functionally, may be involved in environmental stress response. The protein is Zinc finger AN1 domain-containing stress-associated protein 15 (SAP15) of Oryza sativa subsp. japonica (Rice).